A 426-amino-acid chain; its full sequence is Pyruvate, phosphate dikinase regulatory protein, chloroplastic (426 aa).

The N-terminal 41 residues, 1–41 (MIGCAKPLAAPLQAWARPPSPAGRRLPPSFCAPDTSPALTR), are a transit peptide targeting the chloroplast. Disordered regions lie at residues 1-76 (MIGC…HLDR) and 94-124 (AALS…DGED). Positions 94-119 (AALSSASVSAPPVIKSPRPEDAAVAA) are enriched in low complexity. 153–160 (HSVNAALG) lines the ADP pocket.

The protein belongs to the pyruvate, phosphate/water dikinase regulatory protein family. PDRP subfamily. Homodimer at pH 7.5 and homotetramer at pH 8.3. It depends on Mg(2+) as a cofactor. Leaf mesophyll-cells.

Its subcellular location is the plastid. The protein resides in the chloroplast stroma. The enzyme catalyses N(tele)-phospho-L-histidyl/L-threonyl-[pyruvate, phosphate dikinase] + ADP = N(tele)-phospho-L-histidyl/O-phospho-L-threonyl-[pyruvate, phosphate dikinase] + AMP + H(+). It catalyses the reaction N(tele)-phospho-L-histidyl/O-phospho-L-threonyl-[pyruvate, phosphate dikinase] + phosphate + H(+) = N(tele)-phospho-L-histidyl/L-threonyl-[pyruvate, phosphate dikinase] + diphosphate. It functions in the pathway photosynthesis; C4 acid pathway. Its activity is regulated as follows. Regulated by light/dark exposure. Its function is as follows. Bifunctional serine/threonine kinase and phosphorylase involved in the dark/light-mediated regulation of PPDK by catalyzing its phosphorylation/dephosphorylation. Dark/light-induced changes in stromal concentrations of the competing ADP and Pi substrates govern the direction of the reaction. In the dark, phosphorylates the catalytic intermediate of PPDK (PPDK-HisP), inactivating it. Light exposure induces the phosphorolysis reaction that reactivates PPDK. Phosphorylates PPDK at both Ser-528 and Thr-527. Can use ADP as a high specificity substrate and GDP as a lower affinity substrate, but has no activity with UDP. The chain is Pyruvate, phosphate dikinase regulatory protein, chloroplastic (PDRP1) from Zea mays (Maize).